A 675-amino-acid chain; its full sequence is Potassium-transporting ATPase ATP-binding subunit (675 aa).

The next 4 membrane-spanning stretches (helical) occupy residues 34–54, 65–85, 216–236, and 245–265; these read IMFV…FPDI, LITI…SEAF, IALF…IVTL, and LILP…TTIG. Asp304 acts as the 4-aspartylphosphate intermediate in catalysis. ATP-binding positions include Asp341, Glu345, 372–379, and Lys390; that span reads FTAETRMS. The Mg(2+) site is built by Asp513 and Asp517. 3 helical membrane passes run 569–591, 611–631, and 644–664; these read ALTT…ALMM, AIIS…PIAM, and IFIN…FLGI.

This sequence belongs to the cation transport ATPase (P-type) (TC 3.A.3) family. Type IA subfamily. As to quaternary structure, the system is composed of three essential subunits: KdpA, KdpB and KdpC.

It localises to the cell membrane. It carries out the reaction K(+)(out) + ATP + H2O = K(+)(in) + ADP + phosphate + H(+). Part of the high-affinity ATP-driven potassium transport (or Kdp) system, which catalyzes the hydrolysis of ATP coupled with the electrogenic transport of potassium into the cytoplasm. This subunit is responsible for energy coupling to the transport system and for the release of the potassium ions to the cytoplasm. The sequence is that of Potassium-transporting ATPase ATP-binding subunit from Staphylococcus aureus (strain MSSA476).